Here is a 427-residue protein sequence, read N- to C-terminus: CCA-adding enzyme (427 aa).

2 residues coordinate ATP: S50 and K53. S50 and K53 together coordinate CTP. The Mg(2+) site is built by D61, D63, and D112. 3 residues coordinate ATP: H135, K155, and Y164. Residues H135, K155, and Y164 each contribute to the CTP site.

It belongs to the tRNA nucleotidyltransferase/poly(A) polymerase family. Archaeal CCA-adding enzyme subfamily. In terms of assembly, homodimer. Mg(2+) is required as a cofactor.

The catalysed reaction is a tRNA precursor + 2 CTP + ATP = a tRNA with a 3' CCA end + 3 diphosphate. It carries out the reaction a tRNA with a 3' CCA end + 2 CTP + ATP = a tRNA with a 3' CCACCA end + 3 diphosphate. Its function is as follows. Catalyzes the addition and repair of the essential 3'-terminal CCA sequence in tRNAs without using a nucleic acid template. Adds these three nucleotides in the order of C, C, and A to the tRNA nucleotide-73, using CTP and ATP as substrates and producing inorganic pyrophosphate. tRNA 3'-terminal CCA addition is required both for tRNA processing and repair. Also involved in tRNA surveillance by mediating tandem CCA addition to generate a CCACCA at the 3' terminus of unstable tRNAs. While stable tRNAs receive only 3'-terminal CCA, unstable tRNAs are marked with CCACCA and rapidly degraded. The protein is CCA-adding enzyme of Picrophilus torridus (strain ATCC 700027 / DSM 9790 / JCM 10055 / NBRC 100828 / KAW 2/3).